The sequence spans 742 residues: Ferric enterobactin receptor PirA (742 aa).

Positions Met-1–Ala-28 are cleaved as a signal peptide. In terms of domain architecture, TBDR plug spans Gln-57–Lys-184. Disordered stretches follow at residues Gly-91 to Arg-112 and Ser-409 to Lys-435. The segment covering Leu-94 to Gln-108 has biased composition (polar residues). The TBDR beta-barrel domain maps to Arg-189–Phe-742. Residues Cys-516 and Cys-525 are joined by a disulfide bond. The TonB C-terminal box motif lies at Ala-725 to Phe-742.

Belongs to the TonB-dependent receptor family.

It is found in the cell outer membrane. Specific receptor for the siderophore ferric enterobactin. Probably involved in the transport of siderophores, including host catecholamines such as L-DOPA. The sequence is that of Ferric enterobactin receptor PirA from Pseudomonas aeruginosa (strain ATCC 15692 / DSM 22644 / CIP 104116 / JCM 14847 / LMG 12228 / 1C / PRS 101 / PAO1).